Consider the following 423-residue polypeptide: Core protease OPG082 (423 aa).

Catalysis depends on residues His241, Asp248, and Cys328.

It belongs to the peptidase C57 family.

Its subcellular location is the virion. Late protein responsible for processing most or all of the viral core and membrane proteins known to undergo morphogenesis-associated proteolysis. These proteolytic events are involved in the transformation of immature virions (IV) into mature virions (MV). Probably cleaves at least the OPG129, OPG136, OPG098, and OPG144 precursors preferentially at Ala-Gly-|-Ala motifs. Also seems to process Ala-Gly-|-Ser and Ala-Gly-|-Thr motifs. This Homo sapiens (Human) protein is Core protease OPG082 (OPG083).